The following is a 2248-amino-acid chain: Zinc finger protein lin-13 (2248 aa).

The interval Met-1–Pro-189 is disordered. The segment covering Gln-29–Pro-38 has biased composition (polar residues). Basic and acidic residues predominate over residues Lys-54–Glu-92. The segment covering Glu-145–Glu-155 has biased composition (acidic residues). The Required for interaction with hpl-2 isoform a motif lies at Pro-440–Val-444. Residues His-503–His-525 form a C2H2-type 1 zinc finger. Positions Lys-603–Arg-665 are disordered. A compositionally biased stretch (basic and acidic residues) spans Lys-605–Ser-620. 6 C2H2-type zinc fingers span residues Val-812–His-837, Tyr-959–His-982, Leu-1140–His-1162, Phe-1556–His-1578, Trp-1601–His-1623, and Tyr-1657–His-1680. Residues Pro-1859 to Gly-1877 are compositionally biased toward polar residues. The tract at residues Pro-1859–Gln-1900 is disordered.

In terms of assembly, interacts (via PLVPV motif) with chromobox protein homolog hpl-2 (via chromo (shadow subtype) domain); the interaction is direct and influences localization of hpl-2 to nuclear foci. In terms of tissue distribution, in the L3 stage, expressed in syncytial hypodermal cell 7, body wall muscles, intestinal cells, distal tip cells and many neurons.

The protein localises to the nucleus. Involved in repression of vulval fate, possibly by a tumor suppressor protein Rb-mediated mechanism. May act in a common pathway with retinoblastoma-like protein homolog lin-35 and hpl-2 to influence the ER stress response in the intestine. Plays a role in recruiting chromobox protein homolog hpl-2 to specific chromatin sites. This is Zinc finger protein lin-13 (lin-13) from Caenorhabditis elegans.